The chain runs to 808 residues: Sucrose synthase isoform 1 (808 aa).

Residues 277 to 754 (MVFNVVILSP…GLKRIQEKYT (478 aa)) are GT-B glycosyltransferase.

The protein belongs to the glycosyltransferase 1 family. Plant sucrose synthase subfamily. In terms of assembly, homotetramer. Expressed in stems, in roots at different developmental stages, and in flower buds, flowers and maturing seeds, with the highest levels in strong utilization sinks for sucrose such as growing stems and tap root tips.

It catalyses the reaction an NDP-alpha-D-glucose + D-fructose = a ribonucleoside 5'-diphosphate + sucrose + H(+). Fructose acts as a non-competitive inhibitor with an inhibition constant of 17.2 mM. In contrast, glucose inhibits uncompetitively with an inhibition constant of 4.3 mM. Sucrose-cleaving enzyme that provides UDP-glucose and fructose for various metabolic pathways. The sequence is that of Sucrose synthase isoform 1 from Daucus carota (Wild carrot).